Reading from the N-terminus, the 1218-residue chain is ABC transporter NFT1 (1218 aa).

Topologically, residues Met-1–Pro-29 are extracellular. The N-linked (GlcNAc...) asparagine glycan is linked to Asn-4. The chain crosses the membrane as a helical span at residues Leu-30–Leu-50. Residues Arg-51–Lys-103 are Cytoplasmic-facing. Residues Phe-104–Met-124 form a helical membrane-spanning segment. The Extracellular portion of the chain corresponds to Pro-125 to Lys-130. Residues Phe-131–Thr-151 traverse the membrane as a helical segment. Over Leu-152 to Arg-169 the chain is Cytoplasmic. Residues Asp-170–Leu-190 traverse the membrane as a helical segment. Residues Arg-191 to Lys-201 lie on the Extracellular side of the membrane. A helical membrane pass occupies residues Ile-202–Ser-222. At Thr-223–Asn-302 the chain is on the cytoplasmic side. Residues Ile-303–Phe-323 traverse the membrane as a helical segment. The 311-residue stretch at Phe-311–Gln-621 folds into the ABC transmembrane type-1 1 domain. The Extracellular portion of the chain corresponds to Leu-324 to Ser-351. Residues Leu-352 to Leu-374 form a helical membrane-spanning segment. At Gly-375–Ser-449 the chain is on the cytoplasmic side. The tract at residues Asn-410 to Asp-434 is disordered. Residues Ala-424–Asp-434 show a composition bias toward basic and acidic residues. A helical transmembrane segment spans residues Glu-450 to Met-470. Topologically, residues Ile-471–Phe-481 are extracellular. The helical transmembrane segment at Ala-482–Tyr-504 threads the bilayer. Topologically, residues Gln-505–Thr-558 are cytoplasmic. Residues Ile-559–Phe-579 traverse the membrane as a helical segment. At Ser-580–Lys-584 the chain is on the extracellular side. The helical transmembrane segment at Phe-585–Leu-605 threads the bilayer. Over Arg-606–Asp-953 the chain is Cytoplasmic. The ABC transporter domain occupies Phe-651–Asn-892. Gly-686–Ser-693 is a binding site for ATP. A compositionally biased stretch (polar residues) spans Asn-892–Gln-901. The segment at Asn-892–Glu-926 is disordered. Residues Tyr-954–Ile-974 form a helical membrane-spanning segment. The region spanning Val-961–Ser-1218 is the ABC transmembrane type-1 2 domain. Residues Thr-975–Thr-1013 lie on the Extracellular side of the membrane. The helical transmembrane segment at Tyr-1014 to Ile-1034 threads the bilayer. The Cytoplasmic segment spans residues Ser-1035 to Leu-1082. A helical transmembrane segment spans residues Ile-1083–Tyr-1105. At Val-1106–Gln-1109 the chain is on the extracellular side. Residues Phe-1110–Ser-1132 traverse the membrane as a helical segment. The Cytoplasmic portion of the chain corresponds to Arg-1133–Arg-1197. Residues Val-1198–Ser-1218 traverse the membrane as a helical segment.

Belongs to the ABC transporter superfamily. ABCC family. Conjugate transporter (TC 3.A.1.208) subfamily.

The protein resides in the membrane. In Saccharomyces cerevisiae (strain ATCC 204508 / S288c) (Baker's yeast), this protein is ABC transporter NFT1 (NFT1).